We begin with the raw amino-acid sequence, 471 residues long: Tryptophanase (471 aa).

N6-acetyllysine is present on residues Lys5, Lys115, and Lys156. Lys270 carries the post-translational modification N6-(pyridoxal phosphate)lysine. The residue at position 450 (Lys450) is an N6-acetyllysine.

It belongs to the beta-eliminating lyase family. Homotetramer. The cofactor is pyridoxal 5'-phosphate.

The catalysed reaction is L-tryptophan + H2O = indole + pyruvate + NH4(+). Its pathway is amino-acid degradation; L-tryptophan degradation via pyruvate pathway; indole and pyruvate from L-tryptophan: step 1/1. The polypeptide is Tryptophanase (Escherichia fergusonii (strain ATCC 35469 / DSM 13698 / CCUG 18766 / IAM 14443 / JCM 21226 / LMG 7866 / NBRC 102419 / NCTC 12128 / CDC 0568-73)).